Here is a 91-residue protein sequence, read N- to C-terminus: Small ribosomal subunit protein uS19 (91 aa).

Belongs to the universal ribosomal protein uS19 family.

Protein S19 forms a complex with S13 that binds strongly to the 16S ribosomal RNA. In Lactobacillus delbrueckii subsp. bulgaricus (strain ATCC 11842 / DSM 20081 / BCRC 10696 / JCM 1002 / NBRC 13953 / NCIMB 11778 / NCTC 12712 / WDCM 00102 / Lb 14), this protein is Small ribosomal subunit protein uS19.